The following is a 143-amino-acid chain: MPSPADLKNIGLKATVPRLKILEIFQTSEQRHLSAEDVYRILLNEHMDIGLATVYRVLTQFEQAGLLSRNNFESGKAIFELNEGKHHDHLVCLDCGRVEEFFDADIEQRQQSIARERGFALQEHALSLYGNCTKDDCPHRPRR.

The DNA-binding stretch occupies residues 1–83; the sequence is MPSPADLKNI…SGKAIFELNE (83 aa). Positions 32 and 80 each coordinate Zn(2+). The dimerization stretch occupies residues 84-143; it reads GKHHDHLVCLDCGRVEEFFDADIEQRQQSIARERGFALQEHALSLYGNCTKDDCPHRPRR. 2 residues coordinate Fe cation: H86 and D88. Zn(2+) is bound by residues H89, C92, C95, and E100. 2 residues coordinate Fe cation: E107 and H124.

Belongs to the Fur family. As to quaternary structure, homodimer.

Its subcellular location is the cytoplasm. Acts as a global negative controlling element, employing Fe(2+) as a cofactor to bind the operator of the repressed genes. Regulator for biosynthesis of the siderophore alcaligin E. This is Ferric uptake regulation protein (fur) from Cupriavidus metallidurans (strain ATCC 43123 / DSM 2839 / NBRC 102507 / CH34) (Ralstonia metallidurans).